Reading from the N-terminus, the 419-residue chain is Histidine--tRNA ligase (419 aa).

Belongs to the class-II aminoacyl-tRNA synthetase family. As to quaternary structure, homodimer.

It localises to the cytoplasm. The catalysed reaction is tRNA(His) + L-histidine + ATP = L-histidyl-tRNA(His) + AMP + diphosphate + H(+). This Caldicellulosiruptor saccharolyticus (strain ATCC 43494 / DSM 8903 / Tp8T 6331) protein is Histidine--tRNA ligase.